The chain runs to 485 residues: Putative aldehyde dehydrogenase AldY (485 aa).

231–236 lines the NAD(+) pocket; sequence GSTAVG. Catalysis depends on residues E253 and C287.

The protein belongs to the aldehyde dehydrogenase family.

It carries out the reaction an aldehyde + NAD(+) + H2O = a carboxylate + NADH + 2 H(+). Functionally, may contribute to protect cells against stress due to ethanol and related compounds. This chain is Putative aldehyde dehydrogenase AldY (aldY), found in Bacillus subtilis (strain 168).